The following is a 340-amino-acid chain: GTP 3',8-cyclase (340 aa).

The 227-residue stretch at 20–246 folds into the Radical SAM core domain; that stretch reads RFERQYVYLR…PKALSDGPAK (227 aa). Residue arginine 29 participates in GTP binding. 2 residues coordinate [4Fe-4S] cluster: cysteine 36 and cysteine 40. Position 42 (tyrosine 42) interacts with S-adenosyl-L-methionine. Position 43 (cysteine 43) interacts with [4Fe-4S] cluster. Arginine 79 serves as a coordination point for GTP. Residue glycine 83 coordinates S-adenosyl-L-methionine. Residue threonine 110 coordinates GTP. Serine 134 serves as a coordination point for S-adenosyl-L-methionine. A GTP-binding site is contributed by lysine 171. An S-adenosyl-L-methionine-binding site is contributed by methionine 205. Positions 268 and 271 each coordinate [4Fe-4S] cluster. Residue 273–275 participates in GTP binding; sequence RLR. Cysteine 285 is a [4Fe-4S] cluster binding site.

Belongs to the radical SAM superfamily. MoaA family. Monomer and homodimer. The cofactor is [4Fe-4S] cluster.

It catalyses the reaction GTP + AH2 + S-adenosyl-L-methionine = (8S)-3',8-cyclo-7,8-dihydroguanosine 5'-triphosphate + 5'-deoxyadenosine + L-methionine + A + H(+). The protein operates within cofactor biosynthesis; molybdopterin biosynthesis. Functionally, catalyzes the cyclization of GTP to (8S)-3',8-cyclo-7,8-dihydroguanosine 5'-triphosphate. This Actinobacillus pleuropneumoniae serotype 3 (strain JL03) protein is GTP 3',8-cyclase.